The sequence spans 360 residues: Photosystem II protein D1 (360 aa).

3 helical membrane passes run 29-46, 118-133, and 142-156; these read YIGW…SAIA, HFLI…EWEL, and WICV…AATA. His-118 provides a ligand contact to chlorophyll a. Tyr-126 contacts pheophytin a. Asp-170 and Glu-189 together coordinate [CaMn4O5] cluster. The helical transmembrane segment at 197 to 218 threads the bilayer; that stretch reads FHMLGVAGVFGGSLFSAMHGSL. His-198 is a chlorophyll a binding site. A quinone contacts are provided by residues His-215 and 264–265; that span reads SF. Position 215 (His-215) interacts with Fe cation. His-272 is a Fe cation binding site. Residues 274–288 form a helical membrane-spanning segment; it reads FLAAWPVIGIWFTAL. Residues His-332, Glu-333, Asp-342, and Ala-344 each coordinate [CaMn4O5] cluster. Positions 345–360 are excised as a propeptide; that stretch reads AGDVAPVALTAPPING.

The protein belongs to the reaction center PufL/M/PsbA/D family. In terms of assembly, PSII is composed of 1 copy each of membrane proteins PsbA, PsbB, PsbC, PsbD, PsbE, PsbF, PsbH, PsbI, PsbJ, PsbK, PsbL, PsbM, PsbT, PsbX, PsbY, PsbZ, Psb30/Ycf12, peripheral proteins PsbO, CyanoQ (PsbQ), PsbU, PsbV and a large number of cofactors. It forms dimeric complexes. Requires The D1/D2 heterodimer binds P680, chlorophylls that are the primary electron donor of PSII, and subsequent electron acceptors. It shares a non-heme iron and each subunit binds pheophytin, quinone, additional chlorophylls, carotenoids and lipids. D1 provides most of the ligands for the Mn4-Ca-O5 cluster of the oxygen-evolving complex (OEC). There is also a Cl(-1) ion associated with D1 and D2, which is required for oxygen evolution. The PSII complex binds additional chlorophylls, carotenoids and specific lipids. as cofactor. Post-translationally, tyr-161 forms a radical intermediate that is referred to as redox-active TyrZ, YZ or Y-Z. C-terminally processed by CtpA; processing is essential to allow assembly of the oxygen-evolving complex and thus photosynthetic growth.

Its subcellular location is the cellular thylakoid membrane. It carries out the reaction 2 a plastoquinone + 4 hnu + 2 H2O = 2 a plastoquinol + O2. Its function is as follows. Photosystem II (PSII) is a light-driven water:plastoquinone oxidoreductase that uses light energy to abstract electrons from H(2)O, generating O(2) and a proton gradient subsequently used for ATP formation. It consists of a core antenna complex that captures photons, and an electron transfer chain that converts photonic excitation into a charge separation. The D1/D2 (PsbA/PsbD) reaction center heterodimer binds P680, the primary electron donor of PSII as well as several subsequent electron acceptors. The sequence is that of Photosystem II protein D1 from Trichormus azollae (Anabaena azollae).